The chain runs to 354 residues: Ferrochelatase (354 aa).

2 residues coordinate Fe cation: His204 and Glu306.

It belongs to the ferrochelatase family.

The protein localises to the cytoplasm. The catalysed reaction is heme b + 2 H(+) = protoporphyrin IX + Fe(2+). The protein operates within porphyrin-containing compound metabolism; protoheme biosynthesis; protoheme from protoporphyrin-IX: step 1/1. Catalyzes the ferrous insertion into protoporphyrin IX. This Coxiella burnetii (strain CbuG_Q212) (Coxiella burnetii (strain Q212)) protein is Ferrochelatase.